Reading from the N-terminus, the 884-residue chain is Protein argonaute-4 (884 aa).

Residues 242–361 enclose the PAZ domain; the sequence is PVIEFMCEVL…LPLEVCNIVA (120 aa). The region spanning 532–843 is the Piwi domain; that stretch reads LIVVILPGKT…VAFRARYHLV (312 aa). Residues 848–870 form a disordered region; that stretch reads DSAEGSHVSGQSNGRDPQALAKA.

Belongs to the argonaute family. Ago subfamily.

Its subcellular location is the cytoplasm. It is found in the P-body. Functionally, required for RNA-mediated gene silencing (RNAi). Binds to short RNAs such as microRNAs (miRNAs) and represses the translation of mRNAs which are complementary to them. Lacks endonuclease activity and does not appear to cleave target mRNAs. The polypeptide is Protein argonaute-4 (ago4) (Xenopus laevis (African clawed frog)).